The chain runs to 250 residues: Putative endonuclease (250 aa).

Putative endonuclease. This is Putative endonuclease from Escherichia coli (Enterobacteria phage T5).